Consider the following 311-residue polypeptide: Probable dihydroorotate dehydrogenase A (fumarate) (311 aa).

Residues Lys-45, 69–73 (NSMGL), and Asn-128 contribute to the substrate site. 45-46 (KT) is a binding site for FMN. Asn-128 serves as a coordination point for FMN. Cys-131 acts as the Nucleophile in catalysis. 2 residues coordinate FMN: Lys-165 and Val-193. Position 194 to 195 (194 to 195 (NS)) interacts with substrate. Residues Gly-220, 248-249 (GG), and 270-271 (GT) each bind FMN.

The protein belongs to the dihydroorotate dehydrogenase family. Type 1 subfamily. In terms of assembly, homodimer. Requires FMN as cofactor.

The protein resides in the cytoplasm. It carries out the reaction (S)-dihydroorotate + fumarate = orotate + succinate. It functions in the pathway pyrimidine metabolism; UMP biosynthesis via de novo pathway. Its function is as follows. Catalyzes the conversion of dihydroorotate to orotate with fumarate as the electron acceptor. The chain is Probable dihydroorotate dehydrogenase A (fumarate) (pyrDA) from Streptococcus pneumoniae (strain ATCC BAA-255 / R6).